The chain runs to 1385 residues: PsbD mRNA maturation factor Nac2, chloroplastic (1385 aa).

Residues methionine 1 to alanine 45 constitute a chloroplast transit peptide. Low complexity predominate over residues glycine 132–proline 152. 7 disordered regions span residues glycine 132 to arginine 157, alanine 263 to alanine 282, threonine 304 to proline 360, arginine 387 to glutamine 502, asparagine 546 to serine 568, histidine 726 to alanine 756, and alanine 840 to alanine 899. The span at glutamine 271 to serine 281 shows a compositional bias: basic and acidic residues. Residues threonine 304 to serine 313 show a composition bias toward low complexity. Residues asparagine 403–glycine 412 show a composition bias toward gly residues. 4 stretches are compositionally biased toward low complexity: residues alanine 448–alanine 464, alanine 554–serine 568, serine 729–glycine 744, and alanine 854–glycine 893. TPR repeat units follow at residues arginine 851–serine 884, glycine 951–aspartate 984, valine 985–aspartate 1018, lysine 1019–asparagine 1052, threonine 1053–serine 1086, valine 1091–serine 1124, alanine 1125–phenylalanine 1158, alanine 1160–asparagine 1193, and alanine 1205–valine 1238. Disordered stretches follow at residues alanine 1237 to proline 1257 and isoleucine 1333 to methionine 1385. Residues glutamine 1356–glutamate 1365 are compositionally biased toward acidic residues. A compositionally biased stretch (basic and acidic residues) spans alanine 1374 to methionine 1385.

In terms of assembly, part of 2 complexes of about 600 and less than 2000 kDa, both of which also contain non-polysomal RNA.

The protein resides in the plastid. It localises to the chloroplast stroma. In terms of biological role, involved, directly or indirectly, in the processing of the chloroplast encoded psbD mRNA to its mature form, acting via the 5'-UTR of the psbD mRNA. The last 588 amino acids of the protein are sufficient to confer stability on the transcript in vivo. This is PsbD mRNA maturation factor Nac2, chloroplastic (NAC2) from Chlamydomonas reinhardtii (Chlamydomonas smithii).